The sequence spans 150 residues: Ribonuclease H (150 aa).

In terms of domain architecture, RNase H type-1 spans 1–141; it reads MKSIEVHTDG…VDVLARNQAI (141 aa). Mg(2+)-binding residues include Asp-9, Glu-47, Asp-69, and Asp-133.

It belongs to the RNase H family. In terms of assembly, monomer. Mg(2+) serves as cofactor.

It localises to the cytoplasm. It carries out the reaction Endonucleolytic cleavage to 5'-phosphomonoester.. In terms of biological role, endonuclease that specifically degrades the RNA of RNA-DNA hybrids. The protein is Ribonuclease H of Xanthomonas axonopodis pv. citri (strain 306).